A 254-amino-acid polypeptide reads, in one-letter code: Receptor expression-enhancing protein 3 (254 aa).

The next 3 helical transmembrane spans lie at 1–21 (MVSW…YPAY), 35–55 (YVRW…ETVA), and 59–79 (LAWF…LLSP). The disordered stretch occupies residues 162–232 (DEPVGHRPYQ…QSMKSVKTIK (71 aa)). A compositionally biased stretch (acidic residues) spans 198–212 (EQTDEEAEGPFSDDE). Thr200 is modified (phosphothreonine). Phosphoserine is present on Ser209.

Belongs to the DP1 family.

It localises to the endoplasmic reticulum membrane. Microtubule-binding protein required to ensure proper cell division and nuclear envelope reassembly by sequestering the endoplasmic reticulum away from chromosomes during mitosis. Probably acts by clearing the endoplasmic reticulum membrane from metaphase chromosomes. This Mus musculus (Mouse) protein is Receptor expression-enhancing protein 3 (Reep3).